Consider the following 143-residue polypeptide: Large ribosomal subunit protein uL11 (143 aa).

The protein belongs to the universal ribosomal protein uL11 family. In terms of assembly, part of the ribosomal stalk of the 50S ribosomal subunit. Interacts with L10 and the large rRNA to form the base of the stalk. L10 forms an elongated spine to which L12 dimers bind in a sequential fashion forming a multimeric L10(L12)X complex. In terms of processing, one or more lysine residues are methylated.

Forms part of the ribosomal stalk which helps the ribosome interact with GTP-bound translation factors. The chain is Large ribosomal subunit protein uL11 from Clavibacter michiganensis subsp. michiganensis (strain NCPPB 382).